The chain runs to 99 residues: UPF0122 protein UUR10_0158 (99 aa).

This sequence belongs to the UPF0122 family.

Its function is as follows. Might take part in the signal recognition particle (SRP) pathway. This is inferred from the conservation of its genetic proximity to ftsY/ffh. May be a regulatory protein. This chain is UPF0122 protein UUR10_0158, found in Ureaplasma urealyticum serovar 10 (strain ATCC 33699 / Western).